We begin with the raw amino-acid sequence, 443 residues long: MKVVPSLLLSVLLAQVWLVPGLAPSPQSPETPAPQNQTSRVVQAPREEEEDEQEASEEKAGDEEKAWLTASRQQLAKETSNFGFSLLRKISMRHDGNIVFSPFGTSLAMTGLMLGATGLTETQIKRGLHLQALNPTKPGLLPSLFKGLRETLSRNLELGLTQGSFAFIHKDFDVKETFLNLSKRYFDTECVPMNFRNASQAKRLMNHYINKETRGKIPKLFDEINPETKLILVDYILFKGKWLTPFDPVFTEVDTFHQDKYKTIKVPMMYGAGKFASTFDKNFCCHVLKLPYQGNVTMLVVLMEKMGDQLALEDYLTTDLVETWLRNMKTRNMEVFFPKFKLDQKYEMHELLRQMGIRRISPFADLSELSATGRNLQVSRVLQRTVIEVDERGTEAVAAILSEIIAYSMPPAIKVDRPFHFMIYEETSGMLLFLGRVVNPTLL.

A signal peptide spans 1-23; sequence MKVVPSLLLSVLLAQVWLVPGLA. The interval 24–66 is disordered; sequence PSPQSPETPAPQNQTSRVVQAPREEEEDEQEASEEKAGDEEKA. N36 carries N-linked (GlcNAc...) asparagine glycosylation. S56 carries the phosphoserine modification. Basic and acidic residues predominate over residues 56–66; sequence SEEKAGDEEKA. Residues 136-153 form a heparin-binding region; it reads TKPGLLPSLFKGLRETLS. N180 and N295 each carry an N-linked (GlcNAc...) asparagine glycan.

Belongs to the serpin family. Post-translationally, phosphorylated by FAM20C in the extracellular medium.

The protein localises to the secreted. Inhibits activity of the coagulation protease factor Xa in the presence of PROZ, calcium and phospholipids. Also inhibits factor XIa in the absence of cofactors. This chain is Protein Z-dependent protease inhibitor (SERPINA10), found in Pongo abelii (Sumatran orangutan).